A 120-amino-acid chain; its full sequence is U13-lycotoxin-Ls1a (120 aa).

The N-terminal stretch at 1–16 is a signal peptide; the sequence is MKILFVLISILYAVYC. The propeptide occupies 17–54; that stretch reads FSSEEDVDSAYLANELEPVEDINSEQYAALEPKEEQER. Intrachain disulfides connect C56/C70, C63/C76, C69/C87, and C78/C85. An Agouti domain is found at 56-95; sequence CADMGQDCKDDCDCCLNIATCNCWFGRYFCSCTFGDYQTC.

This sequence belongs to the neurotoxin 05 (agouti) family. Contains 6 disulfide bonds. As to expression, expressed by the venom gland.

The protein resides in the secreted. The sequence is that of U13-lycotoxin-Ls1a from Lycosa singoriensis (Wolf spider).